A 482-amino-acid chain; its full sequence is MKSCEHELLKTRRGKSREVSSRFLSSPSASSSPNRRNSTSNSSRDDQNNNGVKGHLGLKKHDRMSDGTRVCFGLPNQSSIEVDTKENRMPSPWINDEDNVILPGRFSVDECALYRASSRRNSCSLLYESFNDETDSELSDVSCASSLSTNRSSWNHKPGIKVSSKYLHDLTAKPSKGNNKTKLRSQDDSQRTNSSKGIENRLQRNNSVSRYGSSMSQWALSPGRSLDTQAVTVPSSKLKPPRGKGVGKLINLGFDFFRSKNKSSPFTSPLKPKTCDTESAHQLKLMNNRLLQWRFVNARACDVNKNVASQEKNQLLCAWDTLIKLNNLVLQERIKLQKKNLEMKLNYVFLSQVKHLEAWEDMEIQHLSSLSIIRDSLHSVLSRLPLKEGAKVNLESAVSIIKNAEAVTDAIISTVDDYAPTMEGIVPLASQLAEVVVQEKLMLEKCHDLLRMISELEMQERSLKCCFLIQHKQTFDTNLLKH.

The span at 1–20 shows a compositional bias: basic and acidic residues; the sequence is MKSCEHELLKTRRGKSREVS. Disordered stretches follow at residues 1-60 and 171-220; these read MKSC…GLKK and TAKP…QWAL. Over residues 21–42 the composition is skewed to low complexity; it reads SRFLSSPSASSSPNRRNSTSNS. Residues 191–219 are compositionally biased toward polar residues; it reads RTNSSKGIENRLQRNNSVSRYGSSMSQWA. A QWRF motif motif is present at residues 292–295; sequence QWRF.

It belongs to the QWRF family.

This is QWRF motif-containing protein 3 (QWRF3) from Arabidopsis thaliana (Mouse-ear cress).